We begin with the raw amino-acid sequence, 693 residues long: Putative tyrosinase-like protein tyr-3 (693 aa).

Positions 1–18 (MIRYIILLVYFLIFEVNS) are cleaved as a signal peptide. 6 residues coordinate Cu cation: His142, His152, His161, His281, His285, and His308. ShKT domains follow at residues 472-506 (CFNENECCGPWSAKGECQKNPVYMNVWCKASCRQC), 516-550 (CSDRHTNCAMWSRSGECNKNPLWMSENCRSSCQKC), 591-625 (CYNEDQCCPIWAQRGQCRSNPGYMTCQCKVSCGVC), and 634-667 (CADYHYDCAAWARRGECLKNKWMPENCRRSCNTC). 12 cysteine pairs are disulfide-bonded: Cys472–Cys506, Cys479–Cys499, Cys488–Cys503, Cys516–Cys550, Cys523–Cys543, Cys532–Cys547, Cys591–Cys625, Cys598–Cys618, Cys607–Cys622, Cys634–Cys667, Cys641–Cys660, and Cys650–Cys664.

The protein belongs to the tyrosinase family. Cu(2+) serves as cofactor.

In Caenorhabditis elegans, this protein is Putative tyrosinase-like protein tyr-3 (tyr-3).